The chain runs to 379 residues: MDLKPRVIRSEDIYRTYWLYWHLLGLESNFFLNRLLDLVITIFVTIWYPIHLILGLFMERSLGDVCKGLPITAACFFASFKFICFRFKLSEIKEIEILFKELDQRALSREECEFFNQNTRREANFIWKSFIVAYGLSNISAIASVLFGGGHKLLYPAWFPYDVQATELIFWLSVTYQIAGVSLAILQNLANDSYPPMTFCVVAGHVRLLAMRLSRIGQGPEETIYLTGKQLIESIEDHRKLMKIVELLRSTMNISQLGQFISSGVNISITLVNILFFADNNFAITYYGVYFLSMVLELFPCCYYGTLISVEMNQLTYAIYSSNWMSMNRSYSRILLIFMQLTLAEVQIKAGGMIGIGMNAFFATVRLAYSFFTLAMSLR.

At 1–37 (MDLKPRVIRSEDIYRTYWLYWHLLGLESNFFLNRLLD) the chain is on the cytoplasmic side. A helical transmembrane segment spans residues 38–58 (LVITIFVTIWYPIHLILGLFM). Residues 59-64 (ERSLGD) lie on the Extracellular side of the membrane. A helical membrane pass occupies residues 65–85 (VCKGLPITAACFFASFKFICF). Over 86 to 129 (RFKLSEIKEIEILFKELDQRALSREECEFFNQNTRREANFIWKS) the chain is Cytoplasmic. A helical transmembrane segment spans residues 130–150 (FIVAYGLSNISAIASVLFGGG). Residues 151–165 (HKLLYPAWFPYDVQA) lie on the Extracellular side of the membrane. The chain crosses the membrane as a helical span at residues 166–186 (TELIFWLSVTYQIAGVSLAIL). Residues 187 to 256 (QNLANDSYPP…LLRSTMNISQ (70 aa)) lie on the Cytoplasmic side of the membrane. Residues 257 to 277 (LGQFISSGVNISITLVNILFF) traverse the membrane as a helical segment. Over 278–281 (ADNN) the chain is Extracellular. A helical transmembrane segment spans residues 282-302 (FAITYYGVYFLSMVLELFPCC). Residues 303–355 (YYGTLISVEMNQLTYAIYSSNWMSMNRSYSRILLIFMQLTLAEVQIKAGGMIG) are Cytoplasmic-facing. A helical membrane pass occupies residues 356–376 (IGMNAFFATVRLAYSFFTLAM). Residues 377 to 379 (SLR) lie on the Extracellular side of the membrane.

This sequence belongs to the insect chemoreceptor superfamily. Heteromeric odorant receptor channel (TC 1.A.69) family. Or2a subfamily. Interacts with Orco. Complexes exist early in the endomembrane system in olfactory sensory neurons (OSNs), coupling these complexes to the conserved ciliary trafficking pathway. As to expression, expressed in 15 cells in the antenna but not the maxillary palp.

Its subcellular location is the cell membrane. In terms of biological role, odorant receptor which mediates acceptance or avoidance behavior, depending on its substrates. The odorant receptor repertoire encodes a large collection of odor stimuli that vary widely in identity, intensity, and duration. May form a complex with Orco to form odorant-sensing units, providing sensitive and prolonged odorant signaling and calcium permeability. Involved in the behavioral responses to pentyl acetate and pyrazines. The polypeptide is Odorant receptor 33b (Or33b) (Drosophila melanogaster (Fruit fly)).